The following is a 119-amino-acid chain: Small ribosomal subunit protein uS10 (119 aa).

Belongs to the universal ribosomal protein uS10 family. In terms of assembly, component of the 40S small ribosomal subunit.

The protein localises to the cytoplasm. Functionally, component of the small ribosomal subunit. The ribosome is a large ribonucleoprotein complex responsible for the synthesis of proteins in the cell. This chain is Small ribosomal subunit protein uS10 (rps20), found in Xenopus laevis (African clawed frog).